Reading from the N-terminus, the 283-residue chain is Small ribosomal subunit protein uS3 (283 aa).

The 69-residue stretch at Val-39–Arg-107 folds into the KH type-2 domain. The segment at Pro-209–Glu-283 is disordered. Residues Leu-217 to Pro-235 are compositionally biased toward basic and acidic residues. Residues Pro-244 to Ala-260 are compositionally biased toward low complexity.

This sequence belongs to the universal ribosomal protein uS3 family. Part of the 30S ribosomal subunit. Forms a tight complex with proteins S10 and S14.

In terms of biological role, binds the lower part of the 30S subunit head. Binds mRNA in the 70S ribosome, positioning it for translation. The protein is Small ribosomal subunit protein uS3 of Herminiimonas arsenicoxydans.